The primary structure comprises 23 residues: Brevinin-1Eb (23 aa).

Cysteines 17 and 23 form a disulfide.

Belongs to the frog skin active peptide (FSAP) family. Brevinin subfamily. Expressed by the skin glands.

It localises to the secreted. Its function is as follows. Shows antibacterial activity against representative Gram-negative and Gram-positive bacterial species, and a very high hemolytic activity. This Pelophylax lessonae (Pool frog) protein is Brevinin-1Eb.